The primary structure comprises 462 residues: MERYGRPGEEGSRSDPSLEWTSHGGETAVEAPMWRLGLSGGGGGGGGGESYPERPDEPDCIYYLRTGVCGYGSRCRFNHPRDRGAVIGGVRGEAGALPERMGHPVCQHFMRTGTCKFGASCKYHHPRQGGGGGSVAPVSLSYLGYPLRPGEKECSYYLRTGQCKFGLTCRFNHPVPLAVQGPPQQPQQQQPQPQPQLQTIYPTLQSQSIPSSQQYGLVLTRPSFLTGSYLQSPYGPPMVLPPGMVPYSGWNPYQASLSAMPSPGTQPSIGSSSIYGLTPLSPSATAYTGTYQSVPSSNSTSKEFPQRPDQPECQYFMRTGDCKFGSSCRYHHPVDAVPPKTGIVLSSIGLPLRPGVAQCTHFAQHGICKFGPACKFDHSMSSSLSYSPSASSLTDMPVAPYPIGSSSLSGSSAPVSSSNEPTKEAVTPAVSSMVSGLSRPEPAETSGDSASVSGSIEAKTSS.

Residues 1–13 (MERYGRPGEEGSR) show a composition bias toward basic and acidic residues. A disordered region spans residues 1–26 (MERYGRPGEEGSRSDPSLEWTSHGGE). 3 consecutive C3H1-type zinc fingers follow at residues 54–82 (RPDE…HPRD), 100–128 (RMGH…HPRQ), and 148–176 (RPGE…HPVP). Positions 288–303 (TGTYQSVPSSNSTSKE) are enriched in polar residues. The disordered stretch occupies residues 288–310 (TGTYQSVPSSNSTSKEFPQRPDQ). 2 C3H1-type zinc fingers span residues 307–335 (RPDQ…HPVD) and 353–381 (RPGV…HSMS). The span at 405–418 (SSSLSGSSAPVSSS) shows a compositional bias: low complexity. Residues 405–462 (SSSLSGSSAPVSSSNEPTKEAVTPAVSSMVSGLSRPEPAETSGDSASVSGSIEAKTSS) form a disordered region. A compositionally biased stretch (polar residues) spans 446-462 (SGDSASVSGSIEAKTSS).

The protein resides in the nucleus. This Arabidopsis thaliana (Mouse-ear cress) protein is Zinc finger CCCH domain-containing protein 34.